The following is a 1265-amino-acid chain: Protein transport protein SEC31 (1265 aa).

WD repeat units lie at residues 6 to 46, 61 to 105, 116 to 156, 162 to 202, 209 to 252, 256 to 296, and 299 to 339; these read EIAR…ELWD, TVDN…KTKD, KHTG…EPFA, TPMD…EVLH, GGRA…APEK, GHKK…KLGE, and TTAN…PSVS. One copy of the WD 8; interaction with SEC13 repeat lies at 380-403; that stretch reads SFGFGSKLVIINTDSSGKSTVKVD. Residues 457-480 are compositionally biased toward basic and acidic residues; the sequence is KESLFEDANNDEKEATSPETKKEN. Disordered stretches follow at residues 457–485, 765–784, and 793–1163; these read KESL…EDDF, VKSS…GQTR, and PAYA…IPEN. Residues 794 to 810 are compositionally biased toward pro residues; the sequence is AYAPPVQAPPVQAPQPP. 5 stretches are compositionally biased toward low complexity: residues 811–824, 865–875, 901–931, 939–951, and 969–987; these read LVQQ…QQQP, TPSSLSGTTSG, AKTA…FGSP, SQPG…SSAG, and SISR…TVPA. Residues 1004 to 1023 are compositionally biased toward polar residues; that stretch reads SDASQPPSSGFASPTLNSSP. Pro residues-rich tracts occupy residues 1062–1071 and 1083–1101; these read YAPPKNPYAV and APPP…PPQP.

It belongs to the WD repeat SEC31 family. The COPII coat is composed of at least 5 proteins: the SEC23/24 complex, the SEC13/31 complex, and the protein SAR1. SEC13 and SEC31 make a 2:2 tetramer that forms the edge element of the COPII outer coat. The tetramer self-assembles in multiple copies to form the complete polyhedral cage. Interacts (via WD 8) with SEC13.

It localises to the cytoplasmic vesicle. The protein resides in the COPII-coated vesicle membrane. The protein localises to the endoplasmic reticulum membrane. Component of the coat protein complex II (COPII) which promotes the formation of transport vesicles from the endoplasmic reticulum (ER). The coat has two main functions, the physical deformation of the endoplasmic reticulum membrane into vesicles and the selection of cargo molecules. This Candida albicans (strain SC5314 / ATCC MYA-2876) (Yeast) protein is Protein transport protein SEC31 (PGA63).